Here is a 69-residue protein sequence, read N- to C-terminus: Atypical cationic antimicrobial peptide (69 aa).

The N-terminal stretch at 1-22 (MAFLKKSLFLVLFLGLVSLSIC) is a signal peptide. Positions 23–45 (DEEKRENEDEENQEDDEQSEMRR) are excised as a propeptide. The interval 25 to 45 (EKRENEDEENQEDDEQSEMRR) is disordered. Positions 30–40 (EDEENQEDDEQ) are enriched in acidic residues.

Belongs to the frog skin active peptide (FSAP) family. As to quaternary structure, monomer and/or weakly self-associated, oligomer, and amyloid-like fibril. Can adopt a monomeric nonamphipathic alpha-helical conformation, possibly with the aid of its cationic N- and C-termini, when bound to anionic membranes. Forms stable and ordered beta-sheet aggregates in aqueous environment or when bound to anionic or zwitterionic phospholipid vesicles. As to expression, expressed by the skin glands.

The protein localises to the secreted. Its subcellular location is the target cell membrane. In terms of biological role, atypical cationic antimicrobial peptide with potent activity against Gram-negative and Gram-positive bacteria. Acts by inducing permeabilization of bacterial membrane. In vitro, also shows chemoattractant activity, which is mediated through a G protein-coupled receptor (probably FPR2 coupled to the ERK1/2 MAPK kinase pathway). Has slow-kinetic self-association and amyloid-like properties that modulate its activity. The soluble, weakly self-associated forms act on leukocytes to promote chemotaxis but have low antibacterial activity, the oligomers exhibit potent antimicrobial activity, whereas the amyloid-like fibrils have a very weak antibacterial activity. The membrane composition has a great influence on the peptide behavior. The peptide induces membrane leakage and insertion to a lesser extent in model membranes of the anionic lipid phosphatidylglycerol (PG) than in the model membranes of the zwitterionic lipid phosphatidylcholine (PC) vesicles. It forms more fibrils in PC than in PG. Membrane perturbations are more observed in the presence of PG than in the presence of PC. The peptide shows low hemolytic activity. This chain is Atypical cationic antimicrobial peptide, found in Phyllomedusa sauvagei (Sauvage's leaf frog).